Reading from the N-terminus, the 214-residue chain is Type 4 apparatus protein DotN (214 aa).

Positions 52, 55, 84, and 87 each coordinate Zn(2+).

In terms of assembly, the T4BSS is a complex nanomachine composed of several subcomplexes. This subunit is part of the Type IV Coupling Complex (T4CC), a subcomplex composed of the DotLMNYZ core and the IcmSW-LvgA adapter subunits, linked by the C-terminal tail of DotL. Six DotLMNYZ hetero-pentameric units may assemble into a hexameric nanomachine, forming an inner membrane channel for effectors to pass through. Interacts directly with DotL. Interacts with DotZ.

Its subcellular location is the cytoplasm. In terms of biological role, component of the Dot/Icm type IVB secretion system (T4BSS), which is used to inject bacterial effector proteins into eukaryotic host cells. Part of a subcomplex which recruits effector proteins and delivers them to the core transmembrane subcomplex. This is Type 4 apparatus protein DotN from Legionella pneumophila subsp. pneumophila (strain Philadelphia 1 / ATCC 33152 / DSM 7513).